The following is a 61-amino-acid chain: Small ribosomal subunit protein uS14B (61 aa).

4 residues coordinate Zn(2+): C24, C27, C40, and C43.

The protein belongs to the universal ribosomal protein uS14 family. Zinc-binding uS14 subfamily. Part of the 30S ribosomal subunit. Contacts proteins S3 and S10. The cofactor is Zn(2+).

Functionally, binds 16S rRNA, required for the assembly of 30S particles and may also be responsible for determining the conformation of the 16S rRNA at the A site. The sequence is that of Small ribosomal subunit protein uS14B from Limosilactobacillus reuteri (strain DSM 20016) (Lactobacillus reuteri).